Reading from the N-terminus, the 640-residue chain is Sodium-dependent nutrient amino acid transporter 1 (640 aa).

Residues 1-13 (MELKPNGNHNNNN) show a composition bias toward low complexity. The tract at residues 1–25 (MELKPNGNHNNNNAAEKSEDTEKAK) is disordered. Over 1 to 30 (MELKPNGNHNNNNAAEKSEDTEKAKAERTN) the chain is Cytoplasmic. The segment covering 16-25 (EKSEDTEKAK) has biased composition (basic and acidic residues). The next 3 helical transmembrane spans lie at 31-51 (WGNG…LGNV), 64-84 (GAFL…MYYL), and 117-137 (TICI…YLFV). Residues N174, N181, and N197 are each glycosylated (N-linked (GlcNAc...) asparagine). The next 9 membrane-spanning stretches (helical) occupy residues 228 to 248 (PDWK…LVIM), 257 to 277 (AAYF…IRAV), 306 to 326 (AVVQ…MFAS), 340 to 360 (IVTT…FAIL), 400 to 420 (LFSV…IVAL), 447 to 467 (CGFL…LTLV), 473 to 493 (TYVV…IYGL), 515 to 535 (CWSF…MVTI), and 551 to 571 (VAGW…GLWY).

It belongs to the sodium:neurotransmitter symporter (SNF) (TC 2.A.22) family.

It localises to the membrane. Functionally, unusual broad substrate spectrum amino acid:sodium cotransporter that promotes absorption of the D isomers of essential amino acids. Neutral amino acids are the preferred substrates, especially methionine and phenylalanine. The chain is Sodium-dependent nutrient amino acid transporter 1 from Drosophila ananassae (Fruit fly).